A 153-amino-acid polypeptide reads, in one-letter code: Interleukin-4 (153 aa).

The N-terminal stretch at Met1–Gly24 is a signal peptide. 3 cysteine pairs are disulfide-bonded: Cys27-Cys151, Cys48-Cys89, and Cys70-Cys123. N-linked (GlcNAc...) asparagine glycosylation is present at Asn62.

The protein belongs to the IL-4/IL-13 family.

Its subcellular location is the secreted. Its function is as follows. Participates in at least several B-cell activation processes as well as of other cell types. It is a costimulator of DNA-synthesis. It induces the expression of class II MHC molecules on resting B-cells. It enhances both secretion and cell surface expression of IgE and IgG1. It also regulates the expression of the low affinity Fc receptor for IgE (CD23) on both lymphocytes and monocytes. Positively regulates IL31RA expression in macrophages. Stimulates autophagy in dendritic cells by interfering with mTORC1 signaling and through the induction of RUFY4. This Papio anubis (Olive baboon) protein is Interleukin-4 (IL4).